A 332-amino-acid polypeptide reads, in one-letter code: Cysteine and histidine-rich domain-containing protein 1 (332 aa).

Alanine 2 carries the N-acetylalanine modification. Residues 2-77 (ALLCYNRACG…KPPEPVKPEV (76 aa)) form an interaction with PPP5C region. Positions 5, 10, 24, 27, 42, and 43 each coordinate Zn(2+). CHORD domains are found at residues 5–64 (CYNR…KGRH) and 157–216 (CKNG…KGRH). Threonine 47 is subject to Phosphothreonine. At serine 51 the chain carries Phosphoserine. Zn(2+) is bound by residues cysteine 59, histidine 64, cysteine 157, cysteine 162, cysteine 176, histidine 179, cysteine 194, cysteine 195, cysteine 211, and histidine 216. Positions 62–82 (GRHNSEKPPEPVKPEVKTTEK) are disordered. A compositionally biased stretch (basic and acidic residues) spans 64–82 (HNSEKPPEPVKPEVKTTEK). The segment at 65–316 (NSEKPPEPVK…AEPMQWASLE (252 aa)) is interaction with HSP90AA1 and HSP90AB1. The region spanning 227 to 316 (VVPCRHDWHQ…AEPMQWASLE (90 aa)) is the CS domain.

Interacts with HSP90AA1, HSP90AB1, PPP5C, ROCK1 and ROCK2.

Regulates centrosome duplication, probably by inhibiting the kinase activity of ROCK2. Proposed to act as co-chaperone for HSP90. May play a role in the regulation of NOD1 via a HSP90 chaperone complex. In vitro, has intrinsic chaperone activity. This function may be achieved by inhibiting association of ROCK2 with NPM1. Plays a role in ensuring the localization of the tyrosine kinase receptor EGFR to the plasma membrane, and thus ensures the subsequent regulation of EGFR activity and EGF-induced actin cytoskeleton remodeling. Involved in stress response. Prevents tumorigenesis. This Macaca fascicularis (Crab-eating macaque) protein is Cysteine and histidine-rich domain-containing protein 1 (CHORDC1).